Consider the following 351-residue polypeptide: Peptide chain release factor 1 (351 aa).

Residue Q233 is modified to N5-methylglutamine.

This sequence belongs to the prokaryotic/mitochondrial release factor family. In terms of processing, methylated by PrmC. Methylation increases the termination efficiency of RF1.

It localises to the cytoplasm. Its function is as follows. Peptide chain release factor 1 directs the termination of translation in response to the peptide chain termination codons UAG and UAA. This Treponema pallidum subsp. pallidum (strain SS14) protein is Peptide chain release factor 1.